Here is a 560-residue protein sequence, read N- to C-terminus: Serine/threonine-protein kinase TOS3 (560 aa).

The Protein kinase domain occupies 50 to 344; that stretch reads FEILATLGNG…LADIKVHPFM (295 aa). Residues 56 to 64 and lysine 79 each bind ATP; that span reads LGNGQYGKV. The active-site Proton acceptor is the aspartate 189.

The protein belongs to the protein kinase superfamily. Ser/Thr protein kinase family. Post-translationally, autophosphorylated.

It catalyses the reaction L-seryl-[protein] + ATP = O-phospho-L-seryl-[protein] + ADP + H(+). The catalysed reaction is L-threonyl-[protein] + ATP = O-phospho-L-threonyl-[protein] + ADP + H(+). Its function is as follows. One of the three SNF1 protein kinases (with SAK1 and ELM1) which are required for growth on nonfermentable carbon sources and nonpreferred sugars and for response to environmental stress. Activates SNF1 by phosphorylation of its activation-loop 'Thr-210'. Required for the regulation by SNF1 of the transcription of a large set of genes, the modification the activity of metabolic enzymes, and the control of various nutrient-responsive cellular developmental processes. Also phosphorylates GAL83, MIG1 and SIP2. The sequence is that of Serine/threonine-protein kinase TOS3 (TOS3) from Saccharomyces cerevisiae (strain ATCC 204508 / S288c) (Baker's yeast).